Here is a 122-residue protein sequence, read N- to C-terminus: Probable dihydroneopterin aldolase (122 aa).

Residues Glu-21, Tyr-54, and 73 to 74 (LE) each bind substrate. The active-site Proton donor/acceptor is the Lys-101.

This sequence belongs to the DHNA family.

The catalysed reaction is 7,8-dihydroneopterin = 6-hydroxymethyl-7,8-dihydropterin + glycolaldehyde. Its pathway is cofactor biosynthesis; tetrahydrofolate biosynthesis; 2-amino-4-hydroxy-6-hydroxymethyl-7,8-dihydropteridine diphosphate from 7,8-dihydroneopterin triphosphate: step 3/4. In terms of biological role, catalyzes the conversion of 7,8-dihydroneopterin to 6-hydroxymethyl-7,8-dihydropterin. The protein is Probable dihydroneopterin aldolase (folB) of Chlamydia muridarum (strain MoPn / Nigg).